A 353-amino-acid chain; its full sequence is S-adenosylmethionine decarboxylase proenzyme (353 aa).

Catalysis depends on residues Glu-9 and Glu-12. Ser-69 acts as the Schiff-base intermediate with substrate; via pyruvic acid in catalysis. Residue Ser-69 is modified to Pyruvic acid (Ser); by autocatalysis. The Proton donor; for catalytic activity role is filled by Cys-83. Residues Ser-232 and His-245 each act as proton acceptor; for processing activity in the active site.

It belongs to the eukaryotic AdoMetDC family. Requires pyruvate as cofactor. Post-translationally, is synthesized initially as an inactive proenzyme. Formation of the active enzyme involves a self-maturation process in which the active site pyruvoyl group is generated from an internal serine residue via an autocatalytic post-translational modification. Two non-identical subunits are generated from the proenzyme in this reaction, and the pyruvate is formed at the N-terminus of the alpha chain, which is derived from the carboxyl end of the proenzyme. The post-translation cleavage follows an unusual pathway, termed non-hydrolytic serinolysis, in which the side chain hydroxyl group of the serine supplies its oxygen atom to form the C-terminus of the beta chain, while the remainder of the serine residue undergoes an oxidative deamination to produce ammonia and the pyruvoyl group blocking the N-terminus of the alpha chain.

The enzyme catalyses S-adenosyl-L-methionine + H(+) = S-adenosyl 3-(methylsulfanyl)propylamine + CO2. The protein operates within amine and polyamine biosynthesis; S-adenosylmethioninamine biosynthesis; S-adenosylmethioninamine from S-adenosyl-L-methionine: step 1/1. This is S-adenosylmethionine decarboxylase proenzyme (SAMDC) from Vicia faba (Broad bean).